Reading from the N-terminus, the 227-residue chain is MRIIVSIGGSVLAPDLEAGRVEAHADAIDSLVADGHEVAAVVGGGDVARQYIDSARDLGATEYDLDALGIDVTRLNARLLVTALNSSAIPEPAESHEDARASMRRGEVAVMGGTVPGHTTDAVAAMLAEMVEADLLIYATSVPGVFSADPNEDPSAERFDRLEASKLVDVISSIETTAGSNAPVDLLAAKVIERSGLRAIVLDGTAPERIADAVDGDPVGTEVLPNE.

9–10 contacts ATP; it reads GS. A UMP-binding site is contributed by Gly-44. Gly-45 and Arg-49 together coordinate ATP. UMP-binding positions include Asp-66 and 114–120; that span reads TVPGHTT. 3 residues coordinate ATP: Thr-140, Phe-146, and Asp-149.

It belongs to the UMP kinase family. As to quaternary structure, homohexamer.

The protein localises to the cytoplasm. The enzyme catalyses UMP + ATP = UDP + ADP. The protein operates within pyrimidine metabolism; CTP biosynthesis via de novo pathway; UDP from UMP (UMPK route): step 1/1. With respect to regulation, inhibited by UTP. Its function is as follows. Catalyzes the reversible phosphorylation of UMP to UDP. The sequence is that of Uridylate kinase from Natronomonas pharaonis (strain ATCC 35678 / DSM 2160 / CIP 103997 / JCM 8858 / NBRC 14720 / NCIMB 2260 / Gabara) (Halobacterium pharaonis).